A 304-amino-acid polypeptide reads, in one-letter code: Protein BOBBER 1 (304 aa).

Alanine 2 is modified (N-acetylalanine). Residues 54–106 (EDEIVVAVRAAKEKLKKAEKKKAEKESVKPVEKKAEKEIVKLVEKKVEKESVK) adopt a coiled-coil conformation. The interval 111 to 141 (ASSAEPIEVEKPKEEEEKKESGPIVPNKGNG) is disordered. Positions 118 to 131 (EVEKPKEEEEKKES) are enriched in basic and acidic residues. Residues 142–231 (TDLENYSWIQ…DQMEWWKCCV (90 aa)) enclose the CS domain.

In terms of tissue distribution, expressed in all seedling tissues with highest expression levels at the root tip.

The protein resides in the cytoplasm. Its subcellular location is the cytoplasmic granule. In terms of biological role, small heat shock protein required for the establishment of auxin gradients and for patterning of the apical domain of the embryo. Involved in the specification of the cotyledon primordia. Also required for normal inflorescence and floral meristem function, normal developmental patterning and thermotolerance. Acts as a molecular chaperone. This Arabidopsis thaliana (Mouse-ear cress) protein is Protein BOBBER 1 (BOB1).